The following is a 226-amino-acid chain: ATP-dependent dethiobiotin synthetase BioD (226 aa).

Mg(2+) is bound at residue Thr-19. Lys-40 is a catalytic residue. Residues Asp-53 and Glu-114 each contribute to the Mg(2+) site. ATP-binding positions include Asp-53, 114–117 (EGAG), and 174–175 (NR).

This sequence belongs to the dethiobiotin synthetase family. In terms of assembly, homodimer. Mg(2+) is required as a cofactor.

It is found in the cytoplasm. It catalyses the reaction (7R,8S)-7,8-diammoniononanoate + CO2 + ATP = (4R,5S)-dethiobiotin + ADP + phosphate + 3 H(+). Its pathway is cofactor biosynthesis; biotin biosynthesis; biotin from 7,8-diaminononanoate: step 1/2. In terms of biological role, catalyzes a mechanistically unusual reaction, the ATP-dependent insertion of CO2 between the N7 and N8 nitrogen atoms of 7,8-diaminopelargonic acid (DAPA, also called 7,8-diammoniononanoate) to form a ureido ring. The sequence is that of ATP-dependent dethiobiotin synthetase BioD from Nitrosospira multiformis (strain ATCC 25196 / NCIMB 11849 / C 71).